Here is a 146-residue protein sequence, read N- to C-terminus: Ribosomal RNA large subunit methyltransferase H (146 aa).

S-adenosyl-L-methionine is bound by residues L62, G94, and 113 to 118 (LGELTL).

The protein belongs to the RNA methyltransferase RlmH family. Homodimer.

The protein localises to the cytoplasm. It carries out the reaction pseudouridine(1915) in 23S rRNA + S-adenosyl-L-methionine = N(3)-methylpseudouridine(1915) in 23S rRNA + S-adenosyl-L-homocysteine + H(+). Functionally, specifically methylates the pseudouridine at position 1915 (m3Psi1915) in 23S rRNA. This Deinococcus radiodurans (strain ATCC 13939 / DSM 20539 / JCM 16871 / CCUG 27074 / LMG 4051 / NBRC 15346 / NCIMB 9279 / VKM B-1422 / R1) protein is Ribosomal RNA large subunit methyltransferase H.